A 325-amino-acid chain; its full sequence is GMP reductase (325 aa).

The Thioimidate intermediate role is filled by C174. 203-226 lines the NADP(+) pocket; sequence MIADGGIRTHGDIAKSIRFGASMV.

This sequence belongs to the IMPDH/GMPR family. GuaC type 2 subfamily.

The catalysed reaction is IMP + NH4(+) + NADP(+) = GMP + NADPH + 2 H(+). Functionally, catalyzes the irreversible NADPH-dependent deamination of GMP to IMP. It functions in the conversion of nucleobase, nucleoside and nucleotide derivatives of G to A nucleotides, and in maintaining the intracellular balance of A and G nucleotides. In Staphylococcus carnosus (strain TM300), this protein is GMP reductase.